We begin with the raw amino-acid sequence, 287 residues long: Succinate--CoA ligase [ADP-forming] subunit alpha 2 (287 aa).

Residues Thr-17–Gln-20, Lys-43, and Ile-96–Glu-98 each bind CoA. A substrate-binding site is contributed by Tyr-159. The Tele-phosphohistidine intermediate role is filled by His-246.

Belongs to the succinate/malate CoA ligase alpha subunit family. As to quaternary structure, heterotetramer of two alpha and two beta subunits.

The catalysed reaction is succinate + ATP + CoA = succinyl-CoA + ADP + phosphate. It carries out the reaction GTP + succinate + CoA = succinyl-CoA + GDP + phosphate. It functions in the pathway carbohydrate metabolism; tricarboxylic acid cycle; succinate from succinyl-CoA (ligase route): step 1/1. Its function is as follows. Succinyl-CoA synthetase functions in the citric acid cycle (TCA), coupling the hydrolysis of succinyl-CoA to the synthesis of either ATP or GTP and thus represents the only step of substrate-level phosphorylation in the TCA. The alpha subunit of the enzyme binds the substrates coenzyme A and phosphate, while succinate binding and nucleotide specificity is provided by the beta subunit. This is Succinate--CoA ligase [ADP-forming] subunit alpha 2 from Archaeoglobus fulgidus (strain ATCC 49558 / DSM 4304 / JCM 9628 / NBRC 100126 / VC-16).